The sequence spans 298 residues: Ethanolamine ammonia-lyase small subunit (298 aa).

The adenosylcob(III)alamin site is built by valine 210, glutamate 231, and cysteine 261.

The protein belongs to the EutC family. In terms of assembly, the basic unit is a heterodimer which dimerizes to form tetramers. The heterotetramers trimerize; 6 large subunits form a core ring with 6 small subunits projecting outwards. The cofactor is adenosylcob(III)alamin.

Its subcellular location is the bacterial microcompartment. It catalyses the reaction ethanolamine = acetaldehyde + NH4(+). It functions in the pathway amine and polyamine degradation; ethanolamine degradation. In terms of biological role, catalyzes the deamination of various vicinal amino-alcohols to oxo compounds. Allows this organism to utilize ethanolamine as the sole source of nitrogen and carbon in the presence of external vitamin B12. The chain is Ethanolamine ammonia-lyase small subunit from Salmonella heidelberg (strain SL476).